The sequence spans 933 residues: Protein translocase subunit SecA (933 aa).

ATP is bound by residues Q87, 105–109 (GEGKT), and D515. Residues C917, C919, C928, and H929 each coordinate Zn(2+).

Belongs to the SecA family. Monomer and homodimer. Part of the essential Sec protein translocation apparatus which comprises SecA, SecYEG and auxiliary proteins SecDF-YajC and YidC. It depends on Zn(2+) as a cofactor.

The protein resides in the cell inner membrane. Its subcellular location is the cytoplasm. The enzyme catalyses ATP + H2O + cellular proteinSide 1 = ADP + phosphate + cellular proteinSide 2.. Functionally, part of the Sec protein translocase complex. Interacts with the SecYEG preprotein conducting channel. Has a central role in coupling the hydrolysis of ATP to the transfer of proteins into and across the cell membrane, serving both as a receptor for the preprotein-SecB complex and as an ATP-driven molecular motor driving the stepwise translocation of polypeptide chains across the membrane. In Burkholderia cenocepacia (strain ATCC BAA-245 / DSM 16553 / LMG 16656 / NCTC 13227 / J2315 / CF5610) (Burkholderia cepacia (strain J2315)), this protein is Protein translocase subunit SecA.